The sequence spans 613 residues: Dihydroxy-acid dehydratase (613 aa).

D81 is a Mg(2+) binding site. C122 is a [2Fe-2S] cluster binding site. D123 and K124 together coordinate Mg(2+). An N6-carboxylysine modification is found at K124. Position 193 (C193) interacts with [2Fe-2S] cluster. E489 provides a ligand contact to Mg(2+). S515 acts as the Proton acceptor in catalysis.

This sequence belongs to the IlvD/Edd family. In terms of assembly, homodimer. [2Fe-2S] cluster serves as cofactor. Mg(2+) is required as a cofactor.

The catalysed reaction is (2R)-2,3-dihydroxy-3-methylbutanoate = 3-methyl-2-oxobutanoate + H2O. It carries out the reaction (2R,3R)-2,3-dihydroxy-3-methylpentanoate = (S)-3-methyl-2-oxopentanoate + H2O. It functions in the pathway amino-acid biosynthesis; L-isoleucine biosynthesis; L-isoleucine from 2-oxobutanoate: step 3/4. It participates in amino-acid biosynthesis; L-valine biosynthesis; L-valine from pyruvate: step 3/4. In terms of biological role, functions in the biosynthesis of branched-chain amino acids. Catalyzes the dehydration of (2R,3R)-2,3-dihydroxy-3-methylpentanoate (2,3-dihydroxy-3-methylvalerate) into 2-oxo-3-methylpentanoate (2-oxo-3-methylvalerate) and of (2R)-2,3-dihydroxy-3-methylbutanoate (2,3-dihydroxyisovalerate) into 2-oxo-3-methylbutanoate (2-oxoisovalerate), the penultimate precursor to L-isoleucine and L-valine, respectively. This chain is Dihydroxy-acid dehydratase, found in Pseudomonas fluorescens (strain SBW25).